The chain runs to 494 residues: MTDRPTITTTAGAPVPDNQNSLTAGPRGGIMLQDYQLIEKLAHQNRERIPERVVHAKGWGAFGSLKITGDISQYTRAKCLQPGAETPMLARFSTVAGEQGAADHERDVRGFALKFYTDEGNWDLVGNNTPVFFIRDPYKFPDFIHTQKRHPKTNLRSATAMWDYWSLSPESLHQVTILMSDRGLPQTPMHMNGYGSHTYSFWNDAGERYWVKFHFKTQQGHKFFTNEEGEAVIGKTREGYQESLFYAIENGEFPRWTVQVQIMPELDVEKTPYNPFDLTKVWPHADYPPVEIGVLELNRNPENYFAEIENAAFSPSNIVPGIGFSPDKVLQARIFSYADAHRYRLGTHYEHIPVNQPRCPVHHYHRDGQMNTYGGIRTGNPDAYYEPNSFNGPAEQPLAKEPPLRIDGDMSRYDHRVGNDDYVQVRALFGLFDEGQKSRLFSNIAAAMGGVPGEIIERQLIHFARVHPEYEAGVRQALKTAHGYEADTISTAAE.

Residues 1–23 show a composition bias toward polar residues; sequence MTDRPTITTTAGAPVPDNQNSLT. The interval 1–25 is disordered; that stretch reads MTDRPTITTTAGAPVPDNQNSLTAG. Residues His55 and Asn127 contribute to the active site. Tyr337 is a heme binding site.

Belongs to the catalase family. Heme is required as a cofactor.

It localises to the periplasm. The enzyme catalyses 2 H2O2 = O2 + 2 H2O. Decomposes hydrogen peroxide into water and oxygen; serves to protect cells from the toxic effects of hydrogen peroxide. This is Catalase A (katA) from Rhizobium meliloti (strain 1021) (Ensifer meliloti).